The following is a 209-amino-acid chain: Probable GTP-binding protein EngB (209 aa).

Positions threonine 22–alanine 198 constitute an EngB-type G domain. Mg(2+) contacts are provided by serine 37 and threonine 59.

The protein belongs to the TRAFAC class TrmE-Era-EngA-EngB-Septin-like GTPase superfamily. EngB GTPase family. Requires Mg(2+) as cofactor.

Functionally, necessary for normal cell division and for the maintenance of normal septation. The protein is Probable GTP-binding protein EngB of Neisseria meningitidis serogroup C (strain 053442).